The following is a 197-amino-acid chain: Probable NADPH:quinone oxidoreductase 1 (197 aa).

The protein belongs to the SsuE family. As to quaternary structure, homotetramer. The cofactor is FMN.

It catalyses the reaction a quinone + NADH + H(+) = a quinol + NAD(+). The enzyme catalyses a quinone + NADPH + H(+) = a quinol + NADP(+). Its function is as follows. The enzyme apparently serves as a quinone reductase in connection with conjugation reactions of hydroquinones involved in detoxification pathways. The sequence is that of Probable NADPH:quinone oxidoreductase 1 from Oryza sativa subsp. japonica (Rice).